Here is a 313-residue protein sequence, read N- to C-terminus: RHOMBOID-like protein 7 (313 aa).

Over residues 1–11 (MLSTAAEEDPE) the composition is skewed to acidic residues. Residues 1 to 24 (MLSTAAEEDPEGGSRETNNGGETT) are disordered. The segment covering 15–24 (RETNNGGETT) has biased composition (polar residues). The next 7 helical transmembrane spans lie at 31–51 (SWII…VMYY), 112–132 (WLHA…YIGV), 143–163 (VGTI…LFLE), 166–186 (ISVG…SELL), 196–216 (GVAI…GTLP), 221–241 (FAHI…LIHP), and 269–289 (LCIV…VILF). Catalysis depends on Ser171, which acts as the Nucleophile. His223 functions as the Charge relay system in the catalytic mechanism.

It belongs to the peptidase S54 family.

It localises to the membrane. It catalyses the reaction Cleaves type-1 transmembrane domains using a catalytic dyad composed of serine and histidine that are contributed by different transmembrane domains.. Probable rhomboid-type serine protease that catalyzes intramembrane proteolysis. May function in embryo development. This chain is RHOMBOID-like protein 7, found in Arabidopsis thaliana (Mouse-ear cress).